The following is a 357-amino-acid chain: IGF-like family receptor 1 (357 aa).

The N-terminal stretch at 1–22 is a signal peptide; sequence MGPLRLLPTAVLLLAQAAPWEA. Residues 23–160 lie on the Extracellular side of the membrane; that stretch reads SQHCGRLEYW…HKAPQQAWPS (138 aa). Residues 100–147 are disordered; sequence IPSGSRGGTGRPCREPVPNKEPCPLTPGKSSILSSQEPSSPGIPSVSW. Low complexity predominate over residues 129-139; sequence SSILSSQEPSS. A helical membrane pass occupies residues 161–181; that stretch reads LSFALFLVLVLLVTSAIILLA. The Cytoplasmic portion of the chain corresponds to 182–357; sequence LQRHHRRLDQ…KLGSSGACLA (176 aa).

It localises to the cell membrane. Functionally, probable cell membrane receptor for the IGF-like family protein IGFL. This Bos taurus (Bovine) protein is IGF-like family receptor 1 (IGFLR1).